We begin with the raw amino-acid sequence, 299 residues long: Taste receptor type 2 member 1 (299 aa).

The Extracellular segment spans residues M1–H9. Residues F10–V30 traverse the membrane as a helical segment. At N31–R55 the chain is on the cytoplasmic side. The helical transmembrane segment at I56–I76 threads the bilayer. Residues M77 to N81 are Extracellular-facing. A helical membrane pass occupies residues C82 to F102. Over Y103–K124 the chain is Cytoplasmic. The helical transmembrane segment at L125 to S145 threads the bilayer. Residues K146 to S178 are Extracellular-facing. N-linked (GlcNAc...) asparagine glycosylation is present at N163. Residues F179 to F199 traverse the membrane as a helical segment. The Cytoplasmic portion of the chain corresponds to S200–A222. The chain crosses the membrane as a helical span at residues P223–I243. Over K244–F257 the chain is Extracellular. A helical membrane pass occupies residues I258–I278. Residues L279 to Q299 lie on the Cytoplasmic side of the membrane.

The protein belongs to the G-protein coupled receptor T2R family.

It localises to the membrane. Receptor that may play a role in the perception of bitterness and is gustducin-linked. May play a role in sensing the chemical composition of the gastrointestinal content. The activity of this receptor may stimulate alpha gustducin, mediate PLC-beta-2 activation and lead to the gating of TRPM5. This chain is Taste receptor type 2 member 1 (TAS2R1), found in Pongo pygmaeus (Bornean orangutan).